A 342-amino-acid polypeptide reads, in one-letter code: Peroxisomal membrane protein import receptor PEX19 (342 aa).

Residues 1–18 (MNENEYDNFDDLDDLLDE) show a composition bias toward acidic residues. Disordered regions lie at residues 1-68 (MNEN…DPEL) and 119-141 (CSSL…GFKN). Basic and acidic residues predominate over residues 41–54 (SENKEKNAESKDSD). Position 62 is a phosphoserine (S62). Phosphoserine is present on S304. Positions 321 to 342 (IDGNDPNLGNLDKELTDGCKQQ) are disordered. The segment covering 331 to 342 (LDKELTDGCKQQ) has biased composition (basic and acidic residues). C339 is subject to Cysteine methyl ester. The S-farnesyl cysteine moiety is linked to residue C339. Positions 340–342 (KQQ) are cleaved as a propeptide — removed in mature form.

Belongs to the peroxin-19 family. In terms of assembly, interacts (farnesylated) with PEX3; farnesylation is required for this interaction. Interacts with PEX2, PEX5, PEX10, PEX11, PEX12, PEX13, PEX14, PEX17, PEX22, PEX25, PEX30 and PEX32; the interaction requires well-defined PEX19-binding sites within the peroxisomal membrane protein targeting signal (mPTS) of the PMPs and is independent on the presence of PEX3. Interacts with VPS1.

It is found in the cytoplasm. The protein resides in the peroxisome membrane. It localises to the endoplasmic reticulum membrane. In terms of biological role, required for proper post-translational import and stabilization of peroxisomal membrane proteins (PMPs). Acts as a cytosolic import receptor for PMPs and delivers them to the docking factor PEX3 at the peroxisomal membrane for subsequent insertion into the membrane. Acts as a chaperone in stabilizing or maintaining PMPs in the lipid bilayer. Directs PEX17, a peripheral component of the peroxisomal matrix protein translocation machinery, to peroxisomes. Stabilizes VPS1, a protein required for peroxisomal fission, at the peroxisomal membrane. Also acts in conjunction with PEX3 in the formation of peroxisomes from preperoxisomal compartments at the endoplasmic reticulum during de novo peroxisome synthesis, probably via the import of additional PMPs. The sequence is that of Peroxisomal membrane protein import receptor PEX19 (PEX19) from Saccharomyces cerevisiae (strain ATCC 204508 / S288c) (Baker's yeast).